Reading from the N-terminus, the 307-residue chain is UDP-N-acetylenolpyruvoylglucosamine reductase (307 aa).

Residues 33–197 (TGGNADFYIT…LEAAFTLAPG (165 aa)) form the FAD-binding PCMH-type domain. Arg-176 is an active-site residue. Ser-226 functions as the Proton donor in the catalytic mechanism. Glu-296 is a catalytic residue.

Belongs to the MurB family. It depends on FAD as a cofactor.

The protein localises to the cytoplasm. It catalyses the reaction UDP-N-acetyl-alpha-D-muramate + NADP(+) = UDP-N-acetyl-3-O-(1-carboxyvinyl)-alpha-D-glucosamine + NADPH + H(+). It participates in cell wall biogenesis; peptidoglycan biosynthesis. Functionally, cell wall formation. This Staphylococcus aureus (strain NCTC 8325 / PS 47) protein is UDP-N-acetylenolpyruvoylglucosamine reductase.